The chain runs to 277 residues: Co-chaperone protein DjlA (277 aa).

At 1 to 4 (MWGK) the chain is on the periplasmic side. A helical membrane pass occupies residues 5–28 (ILGAFFGFLLGGPFGLLLGLFLGH). At 29 to 277 (KFDKARRNVY…DMIRKEKGFK (249 aa)) the chain is on the cytoplasmic side. A J domain is found at 211-277 (DAYEVLGVTE…DMIRKEKGFK (67 aa)).

In terms of assembly, homodimer.

It localises to the cell inner membrane. Its function is as follows. Regulatory DnaK co-chaperone. Direct interaction between DnaK and DjlA is needed for the induction of the wcaABCDE operon, involved in the synthesis of a colanic acid polysaccharide capsule, possibly through activation of the RcsB/RcsC phosphotransfer signaling pathway. The colanic acid capsule may help the bacterium survive conditions outside the host. In Photobacterium profundum (strain SS9), this protein is Co-chaperone protein DjlA.